A 365-amino-acid chain; its full sequence is Testis-specific serine/threonine-protein kinase 1 (365 aa).

Positions 12–272 constitute a Protein kinase domain; sequence YIMGINLGEG…IDEILNHCWV (261 aa). ATP is bound by residues 18–26 and lysine 41; that span reads LGEGSYAKV. The active-site Proton acceptor is the aspartate 136. Threonine 174 bears the Phosphothreonine mark. Residues 282–365 form a disordered region; it reads GAINKEGESS…HPQQPSETHT (84 aa). Residues 303–330 show a composition bias toward basic and acidic residues; the sequence is GADKKSATKLEPREEARSEARSESKPQE. The segment covering 331–347 has biased composition (polar residues); it reads DTLQVVRQSENVGLSSE.

It belongs to the protein kinase superfamily. CAMK Ser/Thr protein kinase family. Interacts with TSSK2. Interacts with HSP90; this interaction stabilizes TSSK1. Mg(2+) serves as cofactor. Autophosphorylated. In terms of processing, ubiquitinated; HSP90 activity negatively regulates ubiquitination and degradation. Testis-specific. Expressed only in postmeiotic spermatids at the final stages of cytodifferentiation in the seminiferous tubules (at protein level). Not detected in released sperms in the lumen of the seminiferous tubules and the epididymis.

It localises to the cytoplasm. It is found in the cytoplasmic vesicle. The protein localises to the secretory vesicle. The protein resides in the acrosome. Its subcellular location is the cell projection. It localises to the cilium. It is found in the flagellum. The enzyme catalyses L-seryl-[protein] + ATP = O-phospho-L-seryl-[protein] + ADP + H(+). It catalyses the reaction L-threonyl-[protein] + ATP = O-phospho-L-threonyl-[protein] + ADP + H(+). With respect to regulation, activated by phosphorylation on Thr-174, potentially by autophosphorylation. Functionally, testis-specific serine/threonine-protein kinase required during spermatid development. Phosphorylates 'Ser-281' of TSKS. Involved in the late stages of spermatogenesis, during the reconstruction of the cytoplasm. During spermatogenesis, required for the transformation of a ring-shaped structure around the base of the flagellum originating from the chromatoid body. In Mus musculus (Mouse), this protein is Testis-specific serine/threonine-protein kinase 1 (Tssk1b).